The chain runs to 350 residues: Biotin synthase (350 aa).

In terms of domain architecture, Radical SAM core spans 38–257; the sequence is NKVQVSTLLS…AVARIIMPMS (220 aa). Residues Cys-53, Cys-57, and Cys-60 each contribute to the [4Fe-4S] cluster site. The [2Fe-2S] cluster site is built by Cys-97, Cys-128, Cys-188, and Arg-260.

Belongs to the radical SAM superfamily. Biotin synthase family. Homodimer. It depends on [4Fe-4S] cluster as a cofactor. Requires [2Fe-2S] cluster as cofactor.

The enzyme catalyses (4R,5S)-dethiobiotin + (sulfur carrier)-SH + 2 reduced [2Fe-2S]-[ferredoxin] + 2 S-adenosyl-L-methionine = (sulfur carrier)-H + biotin + 2 5'-deoxyadenosine + 2 L-methionine + 2 oxidized [2Fe-2S]-[ferredoxin]. The protein operates within cofactor biosynthesis; biotin biosynthesis; biotin from 7,8-diaminononanoate: step 2/2. In terms of biological role, catalyzes the conversion of dethiobiotin (DTB) to biotin by the insertion of a sulfur atom into dethiobiotin via a radical-based mechanism. The chain is Biotin synthase from Photobacterium profundum (strain SS9).